The following is a 556-amino-acid chain: Formate--tetrahydrofolate ligase (556 aa).

65-72 (TPAGEGKS) is an ATP binding site.

It belongs to the formate--tetrahydrofolate ligase family.

It carries out the reaction (6S)-5,6,7,8-tetrahydrofolate + formate + ATP = (6R)-10-formyltetrahydrofolate + ADP + phosphate. It functions in the pathway one-carbon metabolism; tetrahydrofolate interconversion. In Clostridium beijerinckii (strain ATCC 51743 / NCIMB 8052) (Clostridium acetobutylicum), this protein is Formate--tetrahydrofolate ligase.